The chain runs to 830 residues: Adhesion G protein-coupled receptor E2 (830 aa).

A signal peptide spans 1–22 (MRHGHPRLLPGLLMLLLLPLGA). Residues 23 to 540 (AAQKTSGCAR…MAHYDVQEED (518 aa)) are Extracellular-facing. The EGF-like 1 domain occupies 26-68 (KTSGCARWCPPKSTCVNATTCRCSPGFSSLSGEIFSSPLESCD). Cystine bridges form between Cys30–Cys40, Cys34–Cys46, Cys48–Cys67, Cys73–Cys87, and Cys81–Cys96. Residue Asn42 is glycosylated (N-linked (GlcNAc...) asparagine). Residues 69 to 108 (DIDECGPPPLVSCGRLADCQNTEGSYHCMCSPGYALASGA) form the EGF-like 1; calcium-binding domain. N-linked (GlcNAc...) asparagine glycosylation is present at Asn113. One can recognise an EGF-like 2; calcium-binding domain in the interval 121–159 (DVDECQLKPRVCKSRGICTNTKGSYTCKCPPGFELNLGD). Disulfide bonds link Cys125/Cys138, Cys132/Cys147, Cys169/Cys182, Cys176/Cys191, Cys218/Cys231, and Cys225/Cys240. The region spanning 165 to 203 (DVNECTSGQNPCHNSTHCLNNIGGYECRCRPGWKPVPGS) is the EGF-like 3; calcium-binding domain. Asn178 is a glycosylation site (N-linked (GlcNAc...) asparagine). In terms of domain architecture, EGF-like 4; calcium-binding spans 214–253 (DVDECSSGKHTCHYSTVCINTVGSYKCRCRRGWKPKPRFQ). N-linked (GlcNAc...) asparagine glycosylation is found at Asn258, Asn348, Asn361, and Asn379. One can recognise a GAIN-B domain in the interval 358–537 (WTFNASAGTD…AVLMAHYDVQ (180 aa)). 2 cysteine pairs are disulfide-bonded: Cys489/Cys519 and Cys507/Cys521. Positions 489-537 (CVFWEHSQDECGHWSTRGCTVVDSGDTSTTCQCTHLSSFAVLMAHYDVQ) are GPS. A helical membrane pass occupies residues 541–561 (LVLPVITYVGLGLSLLCLLLA). Topologically, residues 562–576 (ALTFLLCKAIQNTST) are cytoplasmic. The chain crosses the membrane as a helical span at residues 577–597 (SLHLQLLICLFLAHLLFLMAI). The Extracellular segment spans residues 598-603 (DRTEIK). Residues 604 to 624 (VLCSIIAGALHYLYLASFTWM) form a helical membrane-spanning segment. Topologically, residues 625 to 651 (LLEGLHLFLTARNLMVVNYSSVSMLMK) are cytoplasmic. A helical membrane pass occupies residues 652–672 (KLMYPVGYGVPTLIVAISAAS). Topologically, residues 673–690 (RSHLYGTRTRCWLNPEER) are extracellular. A helical transmembrane segment spans residues 691 to 711 (FIWSFLGPVCTIFSVNLGFFL). Topologically, residues 712-744 (MTLWILKSKLSSLNSDVSTLQNTRMLTFKAIAQ) are cytoplasmic. Residues 745–765 (LFILGCTWCLGILQVGPAAHV) traverse the membrane as a helical segment. At 766–767 (MA) the chain is on the extracellular side. Residues 768–788 (YLFTIINSLQGVFIFLVYCLL) traverse the membrane as a helical segment. Residues 789-830 (SQQVREEYGKWFKGIRKTRAESEKYTLSSRAMSDVNKPMMVN) are Cytoplasmic-facing.

It belongs to the G-protein coupled receptor 2 family. Adhesion G-protein coupled receptor (ADGR) subfamily. As to quaternary structure, forms a heterodimer, consisting of a large extracellular region non-covalently linked to a seven-transmembrane moiety. Interacts with chondroitin sulfate; the interaction with chondroitin sulfate is calcium-dependent. Interacts with CD55. Post-translationally, autoproteolytically cleaved into 2 subunits, an extracellular alpha subunit and a seven-transmembrane beta subunit.

The protein localises to the cell membrane. It is found in the cell projection. It localises to the ruffle membrane. Cell surface receptor that binds to the chondroitin sulfate moiety of glycosaminoglycan chains and promotes cell attachment. Promotes granulocyte chemotaxis, degranulation and adhesion. In macrophages, promotes the release of inflammatory cytokines, including IL8 and TNF. Signals probably through G-proteins. This is Adhesion G protein-coupled receptor E2 (ADGRE2) from Canis lupus familiaris (Dog).